The sequence spans 595 residues: Elongation factor 4 (595 aa).

The tr-type G domain maps to 2–183 (KNIRNFCIIA…AIVEQVPAPA (182 aa)). Residues 14–19 (DHGKST) and 130–133 (NKVD) contribute to the GTP site.

It belongs to the TRAFAC class translation factor GTPase superfamily. Classic translation factor GTPase family. LepA subfamily.

The protein resides in the cell inner membrane. It carries out the reaction GTP + H2O = GDP + phosphate + H(+). Functionally, required for accurate and efficient protein synthesis under certain stress conditions. May act as a fidelity factor of the translation reaction, by catalyzing a one-codon backward translocation of tRNAs on improperly translocated ribosomes. Back-translocation proceeds from a post-translocation (POST) complex to a pre-translocation (PRE) complex, thus giving elongation factor G a second chance to translocate the tRNAs correctly. Binds to ribosomes in a GTP-dependent manner. The chain is Elongation factor 4 from Porphyromonas gingivalis (strain ATCC BAA-308 / W83).